Here is a 206-residue protein sequence, read N- to C-terminus: Probable N-acetyltransferase 14 (206 aa).

Residues 55-206 form the N-acetyltransferase domain; it reads LRFVLASFAL…TLVREFSKDL (152 aa). The chain crosses the membrane as a helical span at residues 57–77; that stretch reads FVLASFALALLLPVFLAVTAV.

The protein belongs to the camello family.

It is found in the membrane. Its function is as follows. Probable acetyltransferase. May act as a transcription factor regulating the expression of coproporphyrinogen oxidase by binding to a promoter regulatory element. The polypeptide is Probable N-acetyltransferase 14 (NAT14) (Macaca fascicularis (Crab-eating macaque)).